We begin with the raw amino-acid sequence, 407 residues long: MDIILGVVMFTLIVLALVLVILFAKSKLVPTGDITISVNDDPSLAIVTQPGGKLLSALAGAGVFVSSACGGGGSCGQCRVKVKSGGGDILPTELDHITKGEAREGERLACQVAMKTDMDIELPEEIFGVKKWECTVISNDNKATFIKELKLQIPDGESVPFRAGGYIQIEAPAHHVKYADYDIPEEYREDWEKFNLFRYESKVNEETIRAYSMANYPEEHGIIMLNVRIATPPPNNPDVAPGIMSSFIWSLKEGDKCTISGPFGEFFAKDTDAEMVFVGGGAGMAPMRSHIFDQLKRLHSKRKMSFWYGARSKREMFYVEDFDGLAADNDNFVWHCALSDPLPEDNWDGYTGFIHNVLYENYLRDHEAPEDCEYYMCGPPMMNAAVIGMLKDLGVEDENILLDDFGG.

The helical transmembrane segment at 3 to 23 (IILGVVMFTLIVLALVLVILF) threads the bilayer. The 95-residue stretch at 32-126 (GDITISVNDD…DMDIELPEEI (95 aa)) folds into the 2Fe-2S ferredoxin-type domain. [2Fe-2S] cluster contacts are provided by C69, C75, C78, and C110. An FAD-binding FR-type domain is found at 129-269 (VKKWECTVIS…SGPFGEFFAK (141 aa)). Residues 272 to 389 (DAEMVFVGGG…PMMNAAVIGM (118 aa)) are catalytic.

The protein belongs to the NqrF family. As to quaternary structure, composed of six subunits; NqrA, NqrB, NqrC, NqrD, NqrE and NqrF. Requires [2Fe-2S] cluster as cofactor. FAD serves as cofactor.

The protein localises to the cell inner membrane. The catalysed reaction is a ubiquinone + n Na(+)(in) + NADH + H(+) = a ubiquinol + n Na(+)(out) + NAD(+). Its function is as follows. NQR complex catalyzes the reduction of ubiquinone-1 to ubiquinol by two successive reactions, coupled with the transport of Na(+) ions from the cytoplasm to the periplasm. The first step is catalyzed by NqrF, which accepts electrons from NADH and reduces ubiquinone-1 to ubisemiquinone by a one-electron transfer pathway. This Vibrio campbellii (strain ATCC BAA-1116) protein is Na(+)-translocating NADH-quinone reductase subunit F.